The primary structure comprises 723 residues: Probable alpha-fucosidase A (723 aa).

A signal peptide spans 1-15 (MRSLVLLGMSSLATA). 10 N-linked (GlcNAc...) asparagine glycosylation sites follow: asparagine 77, asparagine 98, asparagine 117, asparagine 171, asparagine 194, asparagine 243, asparagine 334, asparagine 558, asparagine 566, and asparagine 595.

Belongs to the glycosyl hydrolase 95 family.

Its subcellular location is the secreted. It carries out the reaction an alpha-L-fucoside + H2O = L-fucose + an alcohol. In terms of biological role, alpha-fucosidase involved in degradation of fucosylated xyloglucans. Hydrolyzes alpha-1,2-linked fucose. The polypeptide is Probable alpha-fucosidase A (afcA) (Aspergillus oryzae (strain ATCC 42149 / RIB 40) (Yellow koji mold)).